Reading from the N-terminus, the 512-residue chain is ATP synthase subunit alpha (512 aa).

169–176 provides a ligand contact to ATP; it reads GDRQTGKT.

It belongs to the ATPase alpha/beta chains family. F-type ATPases have 2 components, CF(1) - the catalytic core - and CF(0) - the membrane proton channel. CF(1) has five subunits: alpha(3), beta(3), gamma(1), delta(1), epsilon(1). CF(0) has three main subunits: a(1), b(2) and c(9-12). The alpha and beta chains form an alternating ring which encloses part of the gamma chain. CF(1) is attached to CF(0) by a central stalk formed by the gamma and epsilon chains, while a peripheral stalk is formed by the delta and b chains.

The protein resides in the cell inner membrane. It catalyses the reaction ATP + H2O + 4 H(+)(in) = ADP + phosphate + 5 H(+)(out). In terms of biological role, produces ATP from ADP in the presence of a proton gradient across the membrane. The alpha chain is a regulatory subunit. This chain is ATP synthase subunit alpha, found in Azoarcus sp. (strain BH72).